The chain runs to 231 residues: NADH-ubiquinone oxidoreductase chain 4 (231 aa).

The next 6 membrane-spanning stretches (helical) occupy residues 1–21 (PIAGSMVLAAILLKLGGYGII), 34–54 (LFLPFMVLALWGAILANLTCL), 63–85 (IAYSSISHMGLVVAAIIIQTPWG), 89–111 (AMALMIAHGFTSSALFCLANTTY), 118–138 (ILILTRGLHNILPMATTWWLL), and 156–176 (LLIMSALFNWCPTTIIMLGLS).

Belongs to the complex I subunit 4 family.

It localises to the mitochondrion membrane. It catalyses the reaction a ubiquinone + NADH + 5 H(+)(in) = a ubiquinol + NAD(+) + 4 H(+)(out). Its function is as follows. Core subunit of the mitochondrial membrane respiratory chain NADH dehydrogenase (Complex I) that is believed to belong to the minimal assembly required for catalysis. Complex I functions in the transfer of electrons from NADH to the respiratory chain. The immediate electron acceptor for the enzyme is believed to be ubiquinone. In Ovophis okinavensis (Ryukyu Island pit viper), this protein is NADH-ubiquinone oxidoreductase chain 4 (MT-ND4).